Here is a 224-residue protein sequence, read N- to C-terminus: Cysteine-rich hydrophobic domain-containing protein 1 (224 aa).

The tract at residues 1–80 (MSILLPNMAE…PPPRVVSEEH (80 aa)) is disordered. The segment covering 13–25 (TISELEEEEEEEA) has biased composition (acidic residues). A compositionally biased stretch (low complexity) spans 26 to 40 (ATSSSSPSSSSSVSG). Over residues 41 to 69 (PDDDEEDEEEEEEEEEEEEEEEEEEEEEA) the composition is skewed to acidic residues. Residues 42–70 (DDDEEDEEEEEEEEEEEEEEEEEEEEEAP) adopt a coiled-coil conformation.

It belongs to the CHIC family. Post-translationally, palmitoylated. Equally expressed in various parts of the brain.

It localises to the cell membrane. The protein localises to the cytoplasmic vesicle. This chain is Cysteine-rich hydrophobic domain-containing protein 1 (CHIC1), found in Homo sapiens (Human).